The sequence spans 428 residues: 3-phosphoshikimate 1-carboxyvinyltransferase (428 aa).

3 residues coordinate 3-phosphoshikimate: lysine 19, serine 20, and arginine 24. Lysine 19 provides a ligand contact to phosphoenolpyruvate. Phosphoenolpyruvate-binding residues include glycine 91 and arginine 119. 3-phosphoshikimate-binding residues include serine 164, glutamine 166, aspartate 312, and lysine 339. Glutamine 166 lines the phosphoenolpyruvate pocket. Aspartate 312 acts as the Proton acceptor in catalysis. 2 residues coordinate phosphoenolpyruvate: arginine 343 and arginine 386.

The protein belongs to the EPSP synthase family. As to quaternary structure, monomer.

The protein resides in the cytoplasm. The catalysed reaction is 3-phosphoshikimate + phosphoenolpyruvate = 5-O-(1-carboxyvinyl)-3-phosphoshikimate + phosphate. Its pathway is metabolic intermediate biosynthesis; chorismate biosynthesis; chorismate from D-erythrose 4-phosphate and phosphoenolpyruvate: step 6/7. In terms of biological role, catalyzes the transfer of the enolpyruvyl moiety of phosphoenolpyruvate (PEP) to the 5-hydroxyl of shikimate-3-phosphate (S3P) to produce enolpyruvyl shikimate-3-phosphate and inorganic phosphate. This Bacillus subtilis (strain 168) protein is 3-phosphoshikimate 1-carboxyvinyltransferase.